The chain runs to 1024 residues: Multidrug resistance protein MdtC (1024 aa).

A run of 12 helical transmembrane segments spans residues 12–32 (VATTLLTLAITLSGIIGFSLL), 333–353 (EVERSLVIAVALVILVVFIFL), 360–380 (LIPAVAVPVSLIGTFAAMYLC), 387–407 (LSLMALTIATGFVVDDAIVVL), 435–455 (VLSMSISLVAVFIPLLLMAGL), 469–489 (VAIGISLVISLTLTPMMCAWL), 528–548 (WVMVVLLSTIALNVWLYISIP), 853–873 (LWLIMAAIATVYIVLGILYES), 875–895 (VHPLTILSTLPSAGVGALLAL), 897–917 (LFDAPFSLIALIGIMLLIGIV), 953–973 (PIIMTTLAALFGALPLVLSSG), and 984–1004 (ITIVGGLVVSQLLTLYTTPVI).

The protein belongs to the resistance-nodulation-cell division (RND) (TC 2.A.6) family. MdtC subfamily. As to quaternary structure, part of a tripartite efflux system composed of MdtA, MdtB and MdtC. MdtC forms a heteromultimer with MdtB.

The protein localises to the cell inner membrane. The polypeptide is Multidrug resistance protein MdtC (Yersinia pseudotuberculosis serotype IB (strain PB1/+)).